The primary structure comprises 360 residues: MDTPLRRSRRLGGLRPECPESLTSVSRTRRALVELESNPEETREPGSPPSVQRAGLGSPERPPKTSPGSPRLQQGSGLESPQGQPEPGAGSPQRQQDLHLESPQRQPEYSPESPRCQPKPSEEVPKCSQDQGVLASELAQSKEELTPGAPQHQLPPVPGSPEPYPGQQAPGPEPSQPLLELTPRAPGSPRGQHEPSKPPPAGETVTGGFGAKKRKGSSSLAPASKKLNKEELPVIPKGKPKSGRVWKDRSKKRFSQMLQDKPLRTSWQRKMKERQERKLAKDFARHLEEEKERRRQEKKQRRAENLKRRLENERKAEVVQVIRNPAKLKRAKKKQLRSIEKRDTLALLQKQPPQRPAAKI.

A compositionally biased stretch (basic residues) spans 1-12; it reads MDTPLRRSRRLG. Disordered stretches follow at residues 1–314 and 328–360; these read MDTP…ENER and LKRA…AAKI. Residues Ser21, Ser24, Ser47, Ser50, and Ser58 each carry the phosphoserine modification. A Phosphothreonine modification is found at Thr65. A phosphoserine mark is found at Ser66, Ser69, Ser80, Ser91, Ser102, Ser110, Ser113, and Ser128. The segment covering 66–83 has biased composition (polar residues); that stretch reads SPGSPRLQQGSGLESPQG. A compositionally biased stretch (pro residues) spans 153-164; the sequence is QLPPVPGSPEPY. 3 positions are modified to phosphoserine: Ser188, Ser217, and Ser218. A compositionally biased stretch (basic residues) spans 238 to 254; it reads GKPKSGRVWKDRSKKRF. A coiled-coil region spans residues 272–323; sequence KERQERKLAKDFARHLEEEKERRRQEKKQRRAENLKRRLENERKAEVVQVIR. 2 stretches are compositionally biased toward basic and acidic residues: residues 273 to 295 and 302 to 314; these read ERQE…ERRR and RAEN…ENER. A Citrulline modification is found at Arg342.

Citrullinated by PADI4.

The protein localises to the nucleus. Its subcellular location is the chromosome. The protein resides in the nucleolus. In terms of biological role, required for proper chromosome segregation during mitosis and error-free mitotic progression. This is Coiled-coil domain-containing protein 86 from Pongo abelii (Sumatran orangutan).